A 1304-amino-acid polypeptide reads, in one-letter code: NAD-dependent protein deacetylase Sir2B (1304 aa).

The region spanning 28–466 is the Deacetylase sirtuin-type domain; the sequence is TEEEKKKVKE…LISIHNIKMK (439 aa). Residues 53 to 72 and 274 to 277 contribute to the NAD(+) site; these read GAGISTSSGLQDFRGPTGIW and QNID. His294 acts as the Proton acceptor in catalysis. Positions 302, 305, 327, and 330 each coordinate Zn(2+). NAD(+) contacts are provided by residues 371–373, 399–401, and Val417; these read GSS and NYQ. 3 disordered regions span residues 545–585, 749–827, and 1154–1203; these read EHNN…SSSI, KVKS…DKDN, and EIKY…DDNN. Composition is skewed to low complexity over residues 548 to 585, 756 to 806, and 1182 to 1203; these read NNNNNNNNNNNNNNNNNNNNNNNNNNNNNNNNNSSSSI, NNNN…ISDH, and DDNNNNDDNNNNDDNNNNDDNN.

This sequence belongs to the sirtuin family. Class IV subfamily. The cofactor is Zn(2+).

It carries out the reaction N(6)-acetyl-L-lysyl-[protein] + NAD(+) + H2O = 2''-O-acetyl-ADP-D-ribose + nicotinamide + L-lysyl-[protein]. Regulates the expression of the surface antigen-coding var genes central to the malaria pathogenesis. Cooperates with Sir2A to mediate silencing and mutual exclusive expression of only 1 of the 60 subtelomeric var genes at a time, coding for functionally different but epitopically variant versions of the erythrocyte membrane protein 1 (PfEMP1) molecule, to evade the detection by host immune surveillance. The chain is NAD-dependent protein deacetylase Sir2B from Plasmodium falciparum (isolate 3D7).